Here is a 609-residue protein sequence, read N- to C-terminus: Leukotriene A-4 hydrolase (609 aa).

Residues 131-133 (QCQ) and 263-268 (PYGGME) contribute to the a peptide site. His-292 contacts Zn(2+). The Proton acceptor role is filled by Glu-293. 2 residues coordinate Zn(2+): His-296 and Glu-315. The active-site Proton donor is the Tyr-380. 560 to 562 (RMK) lines the a peptide pocket.

This sequence belongs to the peptidase M1 family. Homodimer. It depends on Zn(2+) as a cofactor. As to expression, expressed in oocytes.

It is found in the cytoplasm. The catalysed reaction is Release of the N-terminal residue from a tripeptide.. The enzyme catalyses leukotriene A4 + H2O = leukotriene B4. It functions in the pathway lipid metabolism; leukotriene B4 biosynthesis. With respect to regulation, the epoxide hydrolase activity is mildly restrained by suicide inactivation, possibly involving binding of LTA4 to Tyr-380. Its function is as follows. Bifunctional zinc metalloenzyme that comprises both epoxide hydrolase (EH) and aminopeptidase activities. Acts as an epoxide hydrolase to catalyze the conversion of leukotriene A4 (LTA4) to the pro-inflammatory mediator leukotriene B4 (LTB4). During the conversion of LTA4 to LTB4, a second product is formed, the isomeric delta6-trans-delta8-cis-LTB4 (5S,12R-dihydroxy-6,10-trans-8,14-cis-eicosatetraenoic acid), with a relative formation of 10% delta6-trans-delta8-cis-LTB4 compared to 90% LTB4. The production of delta6-trans-delta8-cis-LTB4 seems to depend on the phenylalanine residue at position 375. Also has aminopeptidase activity. This Xenopus laevis (African clawed frog) protein is Leukotriene A-4 hydrolase.